A 122-amino-acid polypeptide reads, in one-letter code: uncharacterized protein (122 aa).

The N-terminal stretch at 1-28 is a signal peptide; it reads MVPGPPESVVRFFLWFCFLLPPTRKASC. N-linked (GlcNAc...) asparagine glycosylation occurs at N49.

The protein resides in the secreted. This is an uncharacterized protein from Homo sapiens (Human).